The chain runs to 434 residues: Nuclear envelope integral membrane protein 1b (434 aa).

Residues 1 to 29 form the signal peptide; it reads MAGEVEGRGCGFSLGVLVTLLVLPLPSLC. 5 consecutive transmembrane segments (helical) span residues 151–171, 175–195, 206–226, 239–259, and 280–300; these read PRLF…DTLS, LFFY…ILVF, PFFA…QLVF, YLIV…YIYG, and LLMY…VIAF. The tract at residues 176-287 is a; required for its colocalization with lamins at the nuclear envelope; it reads FFYSTGITVG…GLLLMYVSVQ (112 aa). The Nuclear localization signal motif lies at 317–325; sequence RKIKLKRAK. The tract at residues 326–395 is b; interaction with ran; sequence PGPPRLLTEE…LTPNEVSVHE (70 aa). The interval 326-434 is interaction with banf1-a and banf1-b; that stretch reads PGPPRLLTEE…PLYPIPRSVF (109 aa). Residues 368-375 form a BAF-binding site (BBS); essential for interaction with banf1-a, banf1-b and ran region; the sequence is SRIQSPKR.

Belongs to the NEMP family. In terms of assembly, interacts with banf1-a and banf1-b. Interacts with ran-gtp. Post-translationally, phosphorylated.

It is found in the nucleus inner membrane. The protein localises to the nucleus envelope. Its function is as follows. In concert with ran, required for proper eye development. May be involved in the expression of early eye marker genes. Contributes to nuclear envelope stiffness in germ cells. Required for fertility. Essential for normal erythropoiesis. Required for efficient nuclear envelope opening and enucleation during the late stages of erythroblast maturation. The chain is Nuclear envelope integral membrane protein 1b (nemp1b) from Xenopus laevis (African clawed frog).